Consider the following 467-residue polypeptide: MNSSPPPANSANGDTTNNGENGQDLNLNFLDKIRLSAKRDAKEDEGEELPTELNTINSAGGFLVVSPDKLSVKYTNTNLHGHDVGVVQANKPAPIKCLTYYFEIFVKDSGIKGQIAIGFTKESFKMRRQPGWEVNSCGYHGDDGYLYRGQGKGEPFGPKFTKDDAVGGGINYASQEFFFTKNGTIVGKIPKDIRGHLFPTVAVHSQNEEVLVNFGKKKFAFDIKGYEASERNKQQLAIEKISIPPNIGYGLVKTYLLHYGYEETLDAFNLATKNTVPPIHIDQENAIDEDDSSYALKQRKNLRQLVRNGEIDTALAELQKLYPQIVQDDKSVVCFLLHCQKFIELVRVGKLEEGVNYGRLELAKFVGLTGFQDIVEDCFALLAYEKPEESSVWYFLEDSQRELVADAVNAAILSTNPNKKDVQRSCHLQSHLEKLLRQLTVCCLERRSLNGDQGETFRLRHVLNNNR.

The segment at 1–25 (MNSSPPPANSANGDTTNNGENGQDL) is disordered. Residues 9 to 25 (NSANGDTTNNGENGQDL) show a composition bias toward polar residues. In terms of domain architecture, B30.2/SPRY spans 31-219 (DKIRLSAKRD…VLVNFGKKKF (189 aa)). Residues 244-276 (PPNIGYGLVKTYLLHYGYEETLDAFNLATKNTV) enclose the LisH domain. The 59-residue stretch at 295-353 (ALKQRKNLRQLVRNGEIDTALAELQKLYPQIVQDDKSVVCFLLHCQKFIELVRVGKLEE) folds into the CTLH domain.

It belongs to the RANBP9/10 family. Interacts with WDR36, WDS, GID8, MAEA and RMD5.

It is found in the cytoplasm. It localises to the nucleus. The protein resides in the perinuclear region. The polypeptide is Ran-binding protein M homolog (Arabidopsis thaliana (Mouse-ear cress)).